Reading from the N-terminus, the 507-residue chain is Cyclin-dependent kinase-like 2 (507 aa).

The region spanning 4–289 (YENLGLVGEG…CADLLHHDFF (286 aa)) is the Protein kinase domain. ATP is bound by residues 10-18 (VGEGSYGMV) and Lys-33. Positions 45-51 (KKIAMRE) match the [NKR]KIAxRE motif. The Proton acceptor role is filled by Asp-126. Residues 365–392 (KTEKGTRASNGSCLHDNGTSHKGLSSTS) are disordered.

The protein belongs to the protein kinase superfamily. CMGC Ser/Thr protein kinase family. CDC2/CDKX subfamily.

It is found in the cytoplasm. The protein localises to the nucleus. The catalysed reaction is L-seryl-[protein] + ATP = O-phospho-L-seryl-[protein] + ADP + H(+). The enzyme catalyses L-threonyl-[protein] + ATP = O-phospho-L-threonyl-[protein] + ADP + H(+). This is Cyclin-dependent kinase-like 2 from Rattus norvegicus (Rat).